A 193-amino-acid polypeptide reads, in one-letter code: Crossover junction endodeoxyribonuclease RuvC (193 aa).

Catalysis depends on residues D7, E68, and D141. The Mg(2+) site is built by D7, E68, and D141. The tract at residues 174 to 193 is disordered; it reads RQWAQATQHATRRRGVRRGM. A compositionally biased stretch (basic residues) spans 183-193; the sequence is ATRRRGVRRGM.

The protein belongs to the RuvC family. In terms of assembly, homodimer which binds Holliday junction (HJ) DNA. The HJ becomes 2-fold symmetrical on binding to RuvC with unstacked arms; it has a different conformation from HJ DNA in complex with RuvA. In the full resolvosome a probable DNA-RuvA(4)-RuvB(12)-RuvC(2) complex forms which resolves the HJ. Requires Mg(2+) as cofactor.

The protein resides in the cytoplasm. It catalyses the reaction Endonucleolytic cleavage at a junction such as a reciprocal single-stranded crossover between two homologous DNA duplexes (Holliday junction).. The RuvA-RuvB-RuvC complex processes Holliday junction (HJ) DNA during genetic recombination and DNA repair. Endonuclease that resolves HJ intermediates. Cleaves cruciform DNA by making single-stranded nicks across the HJ at symmetrical positions within the homologous arms, yielding a 5'-phosphate and a 3'-hydroxyl group; requires a central core of homology in the junction. The consensus cleavage sequence is 5'-(A/T)TT(C/G)-3'. Cleavage occurs on the 3'-side of the TT dinucleotide at the point of strand exchange. HJ branch migration catalyzed by RuvA-RuvB allows RuvC to scan DNA until it finds its consensus sequence, where it cleaves and resolves the cruciform DNA. This Bifidobacterium animalis subsp. lactis (strain AD011) protein is Crossover junction endodeoxyribonuclease RuvC.